A 357-amino-acid polypeptide reads, in one-letter code: Guanine nucleotide-binding protein alpha-2 subunit (357 aa).

G2 carries the N-myristoyl glycine lipid modification. A lipid anchor (S-palmitoyl cysteine) is attached at C4. A G-alpha domain is found at 30–356; that stretch reads NEVKLLLLGA…TQCVMKAGLY (327 aa). The segment at 33 to 46 is G1 motif; sequence KLLLLGAGESGKST. GTP-binding residues include E41, S42, G43, K44, S45, and T46. S45 contributes to the Mg(2+) binding site. S113 carries the phosphoserine modification. GTP contacts are provided by D154, L179, T185, G207, N272, K273, D275, and A328. Positions 177-185 are G2 motif; that stretch reads DILHTRVMT. Position 185 (T185) interacts with Mg(2+). Positions 200–209 are G3 motif; sequence FRLVDVGGQR. A G4 motif region spans residues 268–275; that stretch reads ILFLNKSD. The tract at residues 326-331 is G5 motif; the sequence is TCATDT.

Belongs to the G-alpha family. In terms of assembly, g proteins are composed of 3 units; alpha, beta and gamma. The alpha chain contains the guanine nucleotide binding site. Interacts with the RAP guanine nucleotide exchange factor glfB. Mg(2+) serves as cofactor. Ser-113 is transiently phosphorylated following stimulation with extracellular cAMP.

In terms of biological role, guanine nucleotide-binding proteins (G proteins) are involved as modulators or transducers in various transmembrane signaling systems. G alpha-2 is required for the early aggregation process and most of the known cAMP receptor-mediated responses. Interacts with downstream effector gflB, a Rap guanine nucleotide exchange factor, to regulate the balance between Ras and Rap signaling at the leading edge of chemotaxing cells. In Dictyostelium discoideum (Social amoeba), this protein is Guanine nucleotide-binding protein alpha-2 subunit (gpaB).